A 487-amino-acid polypeptide reads, in one-letter code: Beta-barrel assembly-enhancing protease (487 aa).

The first 27 residues, 1–27 (MFRQLKKNLVATLIAAMTIGQVAPAFA), serve as a signal peptide directing secretion. A Zn(2+)-binding site is contributed by His-136. Glu-137 is an active-site residue. Residues His-140 and Glu-201 each contribute to the Zn(2+) site. Asp-205 (proton donor) is an active-site residue. TPR repeat units follow at residues 309 to 342 (RAAQ…EPGN), 344 to 376 (WYLD…RTNP), 377 to 409 (VLQL…NKDD), and 427 to 460 (DQEL…VKLG).

This sequence belongs to the peptidase M48 family. BepA subfamily. Zn(2+) is required as a cofactor.

Its subcellular location is the periplasm. Functions both as a chaperone and a metalloprotease. Maintains the integrity of the outer membrane by promoting either the assembly or the elimination of outer membrane proteins, depending on their folding state. This is Beta-barrel assembly-enhancing protease from Escherichia coli O157:H7.